Consider the following 317-residue polypeptide: Pectinesterase 31 (317 aa).

T91 and Q121 together coordinate substrate. Residue D144 is the Proton donor of the active site. The active-site Nucleophile is D165. Substrate is bound by residues R222 and W224.

Belongs to the pectinesterase family. Expressed in siliques.

The enzyme catalyses [(1-&gt;4)-alpha-D-galacturonosyl methyl ester](n) + n H2O = [(1-&gt;4)-alpha-D-galacturonosyl](n) + n methanol + n H(+). It participates in glycan metabolism; pectin degradation; 2-dehydro-3-deoxy-D-gluconate from pectin: step 1/5. With respect to regulation, does not require salt for activity. Not inhibited by kiwi pectin methylesterase inhibitor (PMEI). In terms of biological role, acts in the modification of cell walls via demethylesterification of cell wall pectin. Acts in a blockwise manner, resulting in a cell wall rigidification. This is Pectinesterase 31 (PME31) from Arabidopsis thaliana (Mouse-ear cress).